A 1499-amino-acid chain; its full sequence is Tyrosine-protein phosphatase non-receptor type 23 (1499 aa).

Residues 1–219 enclose the BRO1 domain; sequence LNVNLMLGQA…AKIEDKNEVL (219 aa). 2 TPR repeats span residues 75-108 and 199-232; these read AVAH…LNEA and EEKA…DPDT. 3 coiled-coil regions span residues 278 to 305, 377 to 464, and 506 to 537; these read EASL…LGQA, KAVL…NVQY, and YADL…LLDR. 2 disordered regions span residues 536–583 and 718–1006; these read DREL…MMAG and HMAL…LLQP. The interval 598-993 is his; the sequence is HFSPGPFPGS…SSSPESQHGG (396 aa). A compositionally biased stretch (pro residues) spans 724–752; that stretch reads GPAPAPPQPCFPVPQPVPQSVPQPQPLPT. The span at 754-763 shows a compositional bias: polar residues; that stretch reads YTYSIGTKQH. Arginine 785 is modified (omega-N-methylarginine). 4 stretches are compositionally biased toward pro residues: residues 785-827, 856-866, 900-909, and 934-972; these read RIGP…PQPQ, LTPPPPYPFTP, FPSPGPPHPH, and GPPP…PPPC. 20 tandem repeats follow at residues 788–789, 790–791, 792–793, 794–795, 796–797, 798–799, 800–801, 802–803, 804–805, 806–807, 808–809, 810–811, 812–813, 814–815, 816–817, 818–819, 820–821, 822–823, 824–825, and 826–827. Residues 788-827 are 20 X 2 AA approximate tandem repeats of P-Q; it reads PQPPPQLQPQPQPQPQPQPPPQPQPQPQPQPQPQPQPQPQ. Residues serine 985 and serine 986 each carry the phosphoserine modification. Phosphothreonine is present on threonine 994. Residues 1055–1315 form the Tyrosine-protein phosphatase domain; it reads DAVWRELQEA…KFCHEALVRH (261 aa). Residue cysteine 1255 is the Phosphocysteine intermediate of the active site. Disordered stretches follow at residues 1322-1351 and 1381-1499; these read RHGV…QDLV and ASLP…LNKT. Over residues 1335–1348 the composition is skewed to polar residues; it reads MSVSQKSHLPQDSQ. Residues 1390–1419 show a composition bias toward pro residues; the sequence is PGLPPASLPEPTPAPPSSPPPPSSPLPEPP. The span at 1427-1450 shows a compositional bias: low complexity; that stretch reads VPEAPSLGPPSSSLELLASLTPEA. The span at 1464 to 1473 shows a compositional bias: polar residues; it reads SKQNFLQAHN. An Omega-N-methylarginine modification is found at arginine 1478. Low complexity predominate over residues 1482–1499; it reads PTDDPLSLLDPLWTLNKT.

It belongs to the protein-tyrosine phosphatase family. Non-receptor class subfamily. As to quaternary structure, interacts with GRAP2 and GRB2. Interacts with UBAP1 and CHMP4B. In terms of tissue distribution, ubiquitously expressed, with highest levels in brain, testis and kidney, and lowest levels in skeletal muscle.

Its subcellular location is the nucleus. It is found in the cytoplasm. The protein localises to the cytoplasmic vesicle. It localises to the endosome. The protein resides in the cytoskeleton. Its subcellular location is the cilium basal body. It carries out the reaction O-phospho-L-tyrosyl-[protein] + H2O = L-tyrosyl-[protein] + phosphate. Functionally, plays a role in sorting of endocytic ubiquitinated cargos into multivesicular bodies (MVBs) via its interaction with the ESCRT-I complex (endosomal sorting complex required for transport I), and possibly also other ESCRT complexes. May act as a negative regulator of Ras-mediated mitogenic activity. Plays a role in ciliogenesis. The sequence is that of Tyrosine-protein phosphatase non-receptor type 23 (Ptpn23) from Rattus norvegicus (Rat).